The following is a 359-amino-acid chain: Serine hydrolase-like protein DDB_G0286239 (359 aa).

Residues 38–289 (LALHGWLDNA…VPGSHHFHME (252 aa)) enclose the AB hydrolase-1 domain. The active site involves S111. Residues 310 to 359 (FTPSSTTQQQQQQQQSAENKKGDNHNQIAEQDLSTSNTSSPIISKPKPNL) form a disordered region. Residues 334–351 (HNQIAEQDLSTSNTSSPI) show a composition bias toward polar residues.

The protein belongs to the AB hydrolase superfamily.

Probable serine hydrolase. The sequence is that of Serine hydrolase-like protein DDB_G0286239 from Dictyostelium discoideum (Social amoeba).